The chain runs to 454 residues: Methylenetetrahydrofolate--tRNA-(uracil-5-)-methyltransferase TrmFO (454 aa).

9–14 contributes to the FAD binding site; the sequence is GAGLAG. Residues 432–454 form a disordered region; the sequence is LERVSPPSRETGEPTGAEQVDLA.

Belongs to the MnmG family. TrmFO subfamily. It depends on FAD as a cofactor.

The protein resides in the cytoplasm. It catalyses the reaction uridine(54) in tRNA + (6R)-5,10-methylene-5,6,7,8-tetrahydrofolate + NADH + H(+) = 5-methyluridine(54) in tRNA + (6S)-5,6,7,8-tetrahydrofolate + NAD(+). It carries out the reaction uridine(54) in tRNA + (6R)-5,10-methylene-5,6,7,8-tetrahydrofolate + NADPH + H(+) = 5-methyluridine(54) in tRNA + (6S)-5,6,7,8-tetrahydrofolate + NADP(+). Its function is as follows. Catalyzes the folate-dependent formation of 5-methyl-uridine at position 54 (M-5-U54) in all tRNAs. This chain is Methylenetetrahydrofolate--tRNA-(uracil-5-)-methyltransferase TrmFO, found in Pelobacter propionicus (strain DSM 2379 / NBRC 103807 / OttBd1).